We begin with the raw amino-acid sequence, 155 residues long: Small ribosomal subunit protein uS7c (155 aa).

This sequence belongs to the universal ribosomal protein uS7 family. In terms of assembly, part of the 30S ribosomal subunit.

The protein localises to the plastid. The protein resides in the chloroplast. Its function is as follows. One of the primary rRNA binding proteins, it binds directly to 16S rRNA where it nucleates assembly of the head domain of the 30S subunit. The polypeptide is Small ribosomal subunit protein uS7c (rps7) (Schisandra chinensis (Chinese magnolia vine)).